The following is a 428-amino-acid chain: Autophagy-related protein 14 (428 aa).

The stretch at 82–143 forms a coiled coil; sequence QEAIDRTAEI…RKKQLDKVKD (62 aa).

This sequence belongs to the ATG14 family. As to quaternary structure, component of the autophagy-specific VPS34 PI3-kinase complex I.

It is found in the preautophagosomal structure membrane. Its subcellular location is the vacuole membrane. In terms of biological role, required for cytoplasm to vacuole transport (Cvt) and autophagy as a part of the autophagy-specific VPS34 PI3-kinase complex I. This complex is essential to recruit the ATG8-phosphatidylinositol conjugate and the ATG12-ATG5 conjugate to the pre-autophagosomal structure. ATG14 mediates the specific binding of the VPS34 PI3-kinase complex I to the preautophagosomal structure (PAS). Plays a crucial role in hyphal development, conidiogenesis and pathogenicity. Also required for glycogen mobilization, quantity of lipid bodies, and the turgor pressure of appressoria. The protein is Autophagy-related protein 14 of Pyricularia oryzae (strain 70-15 / ATCC MYA-4617 / FGSC 8958) (Rice blast fungus).